The following is a 248-amino-acid chain: Orotidine 5'-phosphate decarboxylase (248 aa).

Residues D22, K44, 71–80, T131, R192, Q201, G221, and R222 contribute to the substrate site; that span reads DLKFHDIPNT. K73 acts as the Proton donor in catalysis.

It belongs to the OMP decarboxylase family. Type 1 subfamily. Homodimer.

The enzyme catalyses orotidine 5'-phosphate + H(+) = UMP + CO2. It functions in the pathway pyrimidine metabolism; UMP biosynthesis via de novo pathway; UMP from orotate: step 2/2. Functionally, catalyzes the decarboxylation of orotidine 5'-monophosphate (OMP) to uridine 5'-monophosphate (UMP). In Photorhabdus laumondii subsp. laumondii (strain DSM 15139 / CIP 105565 / TT01) (Photorhabdus luminescens subsp. laumondii), this protein is Orotidine 5'-phosphate decarboxylase.